Here is a 467-residue protein sequence, read N- to C-terminus: DNA polymerase IV (467 aa).

The region spanning 5–187 (VLHIDMDAFF…LPVGALWGVG (183 aa)) is the UmuC domain. Positions 9 and 104 each coordinate Mg(2+). Glu105 is a catalytic residue. Disordered stretches follow at residues 364–386 (PDTD…VEAP) and 428–449 (TKGR…DPLD).

Belongs to the DNA polymerase type-Y family. In terms of assembly, monomer. It depends on Mg(2+) as a cofactor.

The protein resides in the cytoplasm. The catalysed reaction is DNA(n) + a 2'-deoxyribonucleoside 5'-triphosphate = DNA(n+1) + diphosphate. Its function is as follows. Poorly processive, error-prone DNA polymerase involved in untargeted mutagenesis. Copies undamaged DNA at stalled replication forks, which arise in vivo from mismatched or misaligned primer ends. These misaligned primers can be extended by PolIV. Exhibits no 3'-5' exonuclease (proofreading) activity. May be involved in translesional synthesis, in conjunction with the beta clamp from PolIII. This chain is DNA polymerase IV, found in Corynebacterium glutamicum (strain R).